The sequence spans 38 residues: Photosystem II reaction center protein L (38 aa).

A helical membrane pass occupies residues 17-37 (SLFWGLLLIFVLAILFSSYIF).

This sequence belongs to the PsbL family. PSII is composed of 1 copy each of membrane proteins PsbA, PsbB, PsbC, PsbD, PsbE, PsbF, PsbH, PsbI, PsbJ, PsbK, PsbL, PsbM, PsbT, PsbX, PsbY, PsbZ, Psb30/Ycf12, at least 3 peripheral proteins of the oxygen-evolving complex and a large number of cofactors. It forms dimeric complexes.

Its subcellular location is the plastid. It localises to the cyanelle thylakoid membrane. Its function is as follows. One of the components of the core complex of photosystem II (PSII). PSII is a light-driven water:plastoquinone oxidoreductase that uses light energy to abstract electrons from H(2)O, generating O(2) and a proton gradient subsequently used for ATP formation. It consists of a core antenna complex that captures photons, and an electron transfer chain that converts photonic excitation into a charge separation. This subunit is found at the monomer-monomer interface and is required for correct PSII assembly and/or dimerization. The polypeptide is Photosystem II reaction center protein L (Cyanophora paradoxa).